A 120-amino-acid polypeptide reads, in one-letter code: UPF0102 protein Pfl01_4685 (120 aa).

The protein belongs to the UPF0102 family.

The chain is UPF0102 protein Pfl01_4685 from Pseudomonas fluorescens (strain Pf0-1).